A 279-amino-acid polypeptide reads, in one-letter code: Aldo-keto reductase Mvan_2161 (279 aa).

Tyrosine 54 (proton donor) is an active-site residue. The NADPH site is built by leucine 194, valine 196, isoleucine 232, arginine 234, serine 235, arginine 240, serine 243, asparagine 244, and arginine 270.

It belongs to the aldo/keto reductase family.

The sequence is that of Aldo-keto reductase Mvan_2161 from Mycolicibacterium vanbaalenii (strain DSM 7251 / JCM 13017 / BCRC 16820 / KCTC 9966 / NRRL B-24157 / PYR-1) (Mycobacterium vanbaalenii).